The sequence spans 579 residues: UPF0329 protein ECU06_1620 (579 aa).

2 disordered regions span residues 325 to 360 (EEKA…GEEA) and 370 to 389 (ARRK…KIHK). The span at 329–338 (KGRKDGKKKS) shows a compositional bias: basic residues. Acidic residues predominate over residues 345 to 360 (KEEESETEEVEAGEEA).

The protein belongs to the UPF0329 family.

This Encephalitozoon cuniculi (strain GB-M1) (Microsporidian parasite) protein is UPF0329 protein ECU06_1620.